The sequence spans 295 residues: MNMLPDIETLETAAEGGSHPLFADVPSSVEFNKLRKRLLRLTRQAIEDFSMVEPGQRWLVALSGGKDSYGLLALLLDLKWRGLLPVELLACNLDQGQPNFPKHILPDYLNANGIAHRIEYQDTYSVVTNKLPEGSTYCSLCSRLRRGHLYRIAREEGCSALVLGHHREDILETFFMNLFHGGRLAAMPPKLLNDEGDVMVLRPLSYCAEIDLEKFAAAMRFPIIPCDLCGSQEGLQRNAMKAMLEDIEKRMPGRKDTMIRALSNTRPSHLLDRKLFDFAALNQTLITGQDASDDI.

Positions 63 to 68 (SGGKDS) match the PP-loop motif motif. 3 residues coordinate [4Fe-4S] cluster: cysteine 138, cysteine 141, and cysteine 229.

The protein belongs to the TtcA family. As to quaternary structure, homodimer. The cofactor is Mg(2+). It depends on [4Fe-4S] cluster as a cofactor.

The protein localises to the cytoplasm. The enzyme catalyses cytidine(32) in tRNA + S-sulfanyl-L-cysteinyl-[cysteine desulfurase] + AH2 + ATP = 2-thiocytidine(32) in tRNA + L-cysteinyl-[cysteine desulfurase] + A + AMP + diphosphate + H(+). It functions in the pathway tRNA modification. Catalyzes the ATP-dependent 2-thiolation of cytidine in position 32 of tRNA, to form 2-thiocytidine (s(2)C32). The sulfur atoms are provided by the cysteine/cysteine desulfurase (IscS) system. This is tRNA-cytidine(32) 2-sulfurtransferase from Mesorhizobium japonicum (strain LMG 29417 / CECT 9101 / MAFF 303099) (Mesorhizobium loti (strain MAFF 303099)).